A 641-amino-acid chain; its full sequence is Probable potassium transport system protein Kup (641 aa).

12 consecutive transmembrane segments (helical) span residues 29–49 (ISLAALGVVFGDIGTSPLYAI), 66–86 (ILGVLSLLFWALILIVSLKYL), 119–139 (WVLVSIGLFGASVLLGEAMIT), 156–176 (PAFADMVIPATVVILAGLFLF), 185–205 (GALFGPIILLWFFCLGTLGII), 231–251 (LHGFLVLGAVFLAVTGAEALY), 266–286 (WVLFVLPALLLNYFGQGAFLL), 298–318 (ALVPSWAMIPMVLLATVATVI), 356–376 (IYVPAANWALMAATIGLVLGF), 384–404 (AAYGASMTTTMLISTILFFFV), 415–435 (VLWALVSLFAVVDLSFFGASM), and 438–458 (LFHGAWFPLAVGLLMFTLMNT).

It belongs to the HAK/KUP transporter (TC 2.A.72) family.

The protein resides in the cell inner membrane. It catalyses the reaction K(+)(in) + H(+)(in) = K(+)(out) + H(+)(out). In terms of biological role, transport of potassium into the cell. Likely operates as a K(+):H(+) symporter. This Chlorobium phaeovibrioides (strain DSM 265 / 1930) (Prosthecochloris vibrioformis (strain DSM 265)) protein is Probable potassium transport system protein Kup.